We begin with the raw amino-acid sequence, 505 residues long: ATP synthase subunit alpha (505 aa).

The segment at 118–138 is disordered; it reads VDGLGPINTTNTRPIESPAPG. 172–179 lines the ATP pocket; the sequence is GDRQTGKT.

It belongs to the ATPase alpha/beta chains family. As to quaternary structure, F-type ATPases have 2 components, CF(1) - the catalytic core - and CF(0) - the membrane proton channel. CF(1) has five subunits: alpha(3), beta(3), gamma(1), delta(1), epsilon(1). CF(0) has three main subunits: a(1), b(2) and c(9-12). The alpha and beta chains form an alternating ring which encloses part of the gamma chain. CF(1) is attached to CF(0) by a central stalk formed by the gamma and epsilon chains, while a peripheral stalk is formed by the delta and b chains.

It is found in the cell membrane. The catalysed reaction is ATP + H2O + 4 H(+)(in) = ADP + phosphate + 5 H(+)(out). Functionally, produces ATP from ADP in the presence of a proton gradient across the membrane. The alpha chain is a regulatory subunit. The polypeptide is ATP synthase subunit alpha (Bacillus cereus (strain ATCC 14579 / DSM 31 / CCUG 7414 / JCM 2152 / NBRC 15305 / NCIMB 9373 / NCTC 2599 / NRRL B-3711)).